Here is a 386-residue protein sequence, read N- to C-terminus: Histone-lysine N-methyltransferase SETD7 (386 aa).

A compositionally biased stretch (acidic residues) spans 1-12; sequence MDSSDDEIACDE. Residues 1 to 21 form a disordered region; that stretch reads MDSSDDEIACDEGDYKGAKDD. MORN repeat units follow at residues 15-38, 39-61, 62-84, and 109-131; these read YKGA…SGDE, FIGA…DDST, LEGN…DGSI, and FRGQ…DGGS. The SET domain maps to 222-344; the sequence is ELVYAAPSKI…EGDELTVHYT (123 aa). Residues 234 to 236, Asn-304, and His-305 contribute to the S-adenosyl-L-methionine site; that span reads AGE.

The protein belongs to the class V-like SAM-binding methyltransferase superfamily. Histone-lysine methyltransferase family. SET7 subfamily.

Its subcellular location is the nucleus. It is found in the chromosome. The enzyme catalyses L-lysyl(4)-[histone H3] + S-adenosyl-L-methionine = N(6)-methyl-L-lysyl(4)-[histone H3] + S-adenosyl-L-homocysteine + H(+). The catalysed reaction is L-lysyl-[protein] + S-adenosyl-L-methionine = N(6)-methyl-L-lysyl-[protein] + S-adenosyl-L-homocysteine + H(+). Its function is as follows. Histone methyltransferase that specifically monomethylates 'Lys-4' of histone H3. H3 'Lys-4' methylation represents a specific tag for epigenetic transcriptional activation. Plays a central role in the transcriptional activation of genes. Also has methyltransferase activity toward non-histone proteins. In Halocynthia roretzi (Sea squirt), this protein is Histone-lysine N-methyltransferase SETD7 (setd7).